We begin with the raw amino-acid sequence, 564 residues long: MNNSSELIAVINGFRNSGRFCDINIVINDERINAHRLILSGASEYFSILFSNNFIDSNEYEVNLSHLDYQSVNDLIDYIYGIPLSLTNDNVKYILSTADFLQIGSAITECEKYILKNLCSRNCIDFYIYADKYNNKKIESASFNTILRNILRLINDENFKYLTEESMIKILSDDMLNIKNEDFAPLILIKWLESTQQSCTVELLRCLRISLLSPQVIKSLYSHQLVSSIYECITFLNNIAFLDESFPRYHSIELISIGISNSHDKISINCYNHKKNTWEMISSRRYRCSFAVAVLDNIIYMMGGYDQSPYRSSKVIAYNTCTNSWIYDIPELKYPRSNCGGLADDEYIYCIGGIRDQDSSLTSSIDRWKPSKPYWQKYAKMREPKCDMGVAMLNGLIYVIGGIVKGDTCTDALESLSEDGWMKHQRLPIKMSNMSTIVHDGKIYISGGYNNSSVVNVISNLVLSYNPIYDEWTKLSSLNIPRINPALWSAHNKLYVGGGISDDVRTNTSETYDKEKDCWTLDNGHVLPRNYIMYKCEPIKHKYPLEKTQYTNDFLKYLESFIGS.

The region spanning 21-88 (CDINIVINDE…IYGIPLSLTN (68 aa)) is the BTB domain. In terms of domain architecture, BACK spans 123–219 (CIDFYIYADK…SLLSPQVIKS (97 aa)). Kelch repeat units lie at residues 252-297 (IELI…VLDN), 298-346 (IIYM…ADDE), 347-395 (YIYC…MLNG), 397-441 (IYVI…VHDG), 442-492 (KIYI…SAHN), and 494-539 (LYVG…CEPI).

As to quaternary structure, interacts (via BTB domain) with host CUL3.

The protein localises to the host cytoplasm. In terms of biological role, probable substrate-specific adapter of CUL3-containing E3 ubiquitin-protein ligases which mediate the ubiquitination and subsequent proteasomal degradation of host target proteins. The protein is Kelch repeat and BTB domain-containing protein 1 (KBTB1) of Cowpox virus (strain GRI-90 / Grishak) (CPV).